The sequence spans 579 residues: uncharacterized protein (579 aa).

The next 11 helical transmembrane spans lie at 13-35 (DLIK…IPWI), 39-61 (SISR…LLLN), 66-83 (ANGL…AFYF), 93-110 (AYWG…TYPL), 130-152 (LAIV…IEYL), 162-181 (IVPK…FFLI), 201-223 (LIVN…LYLA), 238-257 (YIIM…RLLL), 264-286 (GFYR…GIHT), 296-315 (IRVM…LFSM), and 324-346 (LFSL…YYLA).

It is found in the cell membrane. This is an uncharacterized protein from Pasteurella multocida (strain Pm70).